A 369-amino-acid chain; its full sequence is Delta(12)-oleate desaturase (369 aa).

2 consecutive transmembrane segments (helical) span residues 41 to 61 (LLSD…YFPL) and 69 to 89 (IAWP…WVIA). Positions 90–94 (HECGH) match the Histidine box-1 motif. The helical transmembrane segment at 102 to 122 (LIDDIVGLFFHSALLVPYFSW) threads the bilayer. The short motif at 126-130 (HRRHH) is the Histidine box-2 element. The next 3 helical transmembrane spans lie at 164 to 184 (LISL…FNMS), 207 to 227 (WIQV…LYRI), and 234 to 254 (FWVM…LVLI). Residues 300-304 (HVVHH) carry the Histidine box-3 motif.

Belongs to the fatty acid desaturase type 1 family.

It is found in the membrane. The protein operates within lipid metabolism; polyunsaturated fatty acid biosynthesis. In terms of biological role, delta(12)-fatty acid desaturase producing in a heterologous system linoleic acid (18:2(9Z,12Z)) and to a lower extent hexadecadienoic acid (16:2(9Z,12Z)). This is Delta(12)-oleate desaturase from Trichosanthes kirilowii (Chinese snake gourd).